We begin with the raw amino-acid sequence, 475 residues long: BICD family-like cargo adapter 2 (475 aa).

Residues 56–275 (ELGKALLERN…LKELQDELHM (220 aa)) adopt a coiled-coil conformation. 2 stretches are compositionally biased toward polar residues: residues 286–300 (HSSL…TAVQ) and 308–318 (SAETQSITSGY). The tract at residues 286–318 (HSSLHSEIQQSTAVQNHEKGRNSAETQSITSGY) is disordered. The stretch at 340–413 (RLQDQVTMQH…ESLNLQLLST (74 aa)) forms a coiled coil. A compositionally biased stretch (low complexity) spans 440 to 450 (QSQKQQETQKP). Positions 440 to 459 (QSQKQQETQKPPESPQNSFL) are disordered.

Belongs to the BICDR family.

This Xenopus tropicalis (Western clawed frog) protein is BICD family-like cargo adapter 2 (bicdl2).